The following is a 201-amino-acid chain: Holliday junction branch migration complex subunit RuvA (201 aa).

The segment at 1 to 64 (MIGRLYGKII…EDAHLLFGFA (64 aa)) is domain I. Residues 65-143 (QKQDRTLFRE…GIAQTDFFVE (79 aa)) form a domain II region. The segment at 144–154 (HSHETMVATYE) is flexible linker. The interval 154 to 201 (EIDASEEARDALLALGYKLTDAEKMIKKVHKSGATSEQLIRDALKASL) is domain III.

It belongs to the RuvA family. In terms of assembly, homotetramer. Forms an RuvA(8)-RuvB(12)-Holliday junction (HJ) complex. HJ DNA is sandwiched between 2 RuvA tetramers; dsDNA enters through RuvA and exits via RuvB. An RuvB hexamer assembles on each DNA strand where it exits the tetramer. Each RuvB hexamer is contacted by two RuvA subunits (via domain III) on 2 adjacent RuvB subunits; this complex drives branch migration. In the full resolvosome a probable DNA-RuvA(4)-RuvB(12)-RuvC(2) complex forms which resolves the HJ.

It localises to the cytoplasm. Functionally, the RuvA-RuvB-RuvC complex processes Holliday junction (HJ) DNA during genetic recombination and DNA repair, while the RuvA-RuvB complex plays an important role in the rescue of blocked DNA replication forks via replication fork reversal (RFR). RuvA specifically binds to HJ cruciform DNA, conferring on it an open structure. The RuvB hexamer acts as an ATP-dependent pump, pulling dsDNA into and through the RuvAB complex. HJ branch migration allows RuvC to scan DNA until it finds its consensus sequence, where it cleaves and resolves the cruciform DNA. The protein is Holliday junction branch migration complex subunit RuvA of Haemophilus ducreyi (strain 35000HP / ATCC 700724).